Reading from the N-terminus, the 88-residue chain is Putative membrane protein insertion efficiency factor (88 aa).

The interval 68 to 88 is disordered; the sequence is VPPKKDKNADSEHSCKVHHHH. Over residues 69–82 the composition is skewed to basic and acidic residues; the sequence is PPKKDKNADSEHSC.

It belongs to the UPF0161 family.

Its subcellular location is the cell membrane. Its function is as follows. Could be involved in insertion of integral membrane proteins into the membrane. The protein is Putative membrane protein insertion efficiency factor of Listeria monocytogenes serovar 1/2a (strain ATCC BAA-679 / EGD-e).